We begin with the raw amino-acid sequence, 187 residues long: Ribosome-recycling factor (187 aa).

Belongs to the RRF family.

It localises to the cytoplasm. Functionally, responsible for the release of ribosomes from messenger RNA at the termination of protein biosynthesis. May increase the efficiency of translation by recycling ribosomes from one round of translation to another. The sequence is that of Ribosome-recycling factor from Anaeromyxobacter sp. (strain Fw109-5).